The following is a 1010-amino-acid chain: Glycine--tRNA ligase (1010 aa).

The tract at residues 1-312 (MSEHPLTLQS…TSESVVPMIS (312 aa)) is glycine--tRNA ligase alpha subunit. The interval 313 to 1010 (STEDLLLEIG…SLCHWESVAV (698 aa)) is glycine--tRNA ligase beta subunit.

The protein belongs to the class-II aminoacyl-tRNA synthetase family.

The protein resides in the cytoplasm. It carries out the reaction tRNA(Gly) + glycine + ATP = glycyl-tRNA(Gly) + AMP + diphosphate. The chain is Glycine--tRNA ligase (glyQS) from Chlamydia pneumoniae (Chlamydophila pneumoniae).